The chain runs to 339 residues: Probable geranylgeranyl transferase type-2 subunit beta (339 aa).

PFTB repeat units lie at residues 24–65, 72–113, 120–161, 168–209, 216–257, and 264–306; these read IDKH…YLLK, KNEV…IQYD, INSV…SLLK, CEKA…SILN, IDKL…SAID, and NDKL…SLMG. Residues 194-196 and 236-248 each bind geranylgeranyl diphosphate; these read HAG and RPEKSSDVCYSWW. Zn(2+) contacts are provided by Asp-242, Cys-244, and His-294.

The protein belongs to the protein prenyltransferase subunit beta family. Heterodimer of an alpha and a beta subunit. Zn(2+) is required as a cofactor.

It carries out the reaction geranylgeranyl diphosphate + L-cysteinyl-[protein] = S-geranylgeranyl-L-cysteinyl-[protein] + diphosphate. Functionally, catalyzes the transfer of a geranyl-geranyl moiety from geranyl-geranyl pyrophosphate to both cysteines in Rab proteins with an -XXCC, -XCXC and -CCXX C-terminal. The chain is Probable geranylgeranyl transferase type-2 subunit beta (rabggtb) from Dictyostelium discoideum (Social amoeba).